The primary structure comprises 416 residues: LL-diaminopimelate aminotransferase (416 aa).

Residues Tyr15 and Gly42 each coordinate substrate. Residues Tyr72, 108–109, Tyr132, Asn187, Tyr218, and 246–248 each bind pyridoxal 5'-phosphate; these read SK and SFS. 3 residues coordinate substrate: Lys109, Tyr132, and Asn187. Lys249 is subject to N6-(pyridoxal phosphate)lysine. The pyridoxal 5'-phosphate site is built by Arg257 and Asn292. Substrate-binding residues include Asn292 and Arg388.

It belongs to the class-I pyridoxal-phosphate-dependent aminotransferase family. LL-diaminopimelate aminotransferase subfamily. As to quaternary structure, homodimer. The cofactor is pyridoxal 5'-phosphate.

It carries out the reaction (2S,6S)-2,6-diaminopimelate + 2-oxoglutarate = (S)-2,3,4,5-tetrahydrodipicolinate + L-glutamate + H2O + H(+). It functions in the pathway amino-acid biosynthesis; L-lysine biosynthesis via DAP pathway; LL-2,6-diaminopimelate from (S)-tetrahydrodipicolinate (aminotransferase route): step 1/1. Involved in the synthesis of meso-diaminopimelate (m-DAP or DL-DAP), required for both lysine and peptidoglycan biosynthesis. Catalyzes the direct conversion of tetrahydrodipicolinate to LL-diaminopimelate. In Synechococcus sp. (strain JA-2-3B'a(2-13)) (Cyanobacteria bacterium Yellowstone B-Prime), this protein is LL-diaminopimelate aminotransferase.